The sequence spans 254 residues: 3-deoxy-manno-octulosonate cytidylyltransferase (254 aa).

It belongs to the KdsB family.

The protein localises to the cytoplasm. The enzyme catalyses 3-deoxy-alpha-D-manno-oct-2-ulosonate + CTP = CMP-3-deoxy-beta-D-manno-octulosonate + diphosphate. Its pathway is nucleotide-sugar biosynthesis; CMP-3-deoxy-D-manno-octulosonate biosynthesis; CMP-3-deoxy-D-manno-octulosonate from 3-deoxy-D-manno-octulosonate and CTP: step 1/1. It participates in bacterial outer membrane biogenesis; lipopolysaccharide biosynthesis. Functionally, activates KDO (a required 8-carbon sugar) for incorporation into bacterial lipopolysaccharide in Gram-negative bacteria. The sequence is that of 3-deoxy-manno-octulosonate cytidylyltransferase from Bordetella petrii (strain ATCC BAA-461 / DSM 12804 / CCUG 43448).